The chain runs to 218 residues: MKPSFLHIPAAALLLCSLWILPIHCCNKALCASDVSKCLIQELCQCRPTDGNCSCCKECMLCLGTLWDECCDCVGMCNPRNYSDTPPTSKSTVEELHEPIPSLFRALTEGDTQLNWNIVTFPVVEELSHHENLVSFLETVNQPQQQNVSVQVSHSNEKEHMCTVVYFDDCMSIHQCKVSCESMGASKYRWFHNACCECVGPECIDYGSKTVKCVNCMV.

An N-terminal signal peptide occupies residues 1–25 (MKPSFLHIPAAALLLCSLWILPIHC). N-linked (GlcNAc...) asparagine glycans are attached at residues Asn-52, Asn-81, and Asn-147.

This sequence belongs to the twisted gastrulation protein family. As to quaternary structure, binds directly to bmp2, bmp4 and bmp7 and can form a ternary complex with bmps and chordin, thus preventing the binding of bmps to their cell surface receptors.

The protein resides in the secreted. Functionally, involved in dorsal-ventral patterning, permitting peak BMP signaling by antagonizing the residual anti-BMP activity of the cleavage products of chrd. Functions to promote the formation of ventral mesoderm by increasing the activity of bmp7 and other BMPS. Seems to antagonize BMP signaling by forming ternary complexes with chrd and BMPs, thereby preventing BMPs from binding to their receptors. In addition to the anti-BMP function, also has pro-BMP activity, partly mediated by cleavage and degradation of chrd, which releases BMPs from ternary complexes. May be an important modulator of BMP-regulated cartilage development and chondrocyte differentiation. In Xenopus laevis (African clawed frog), this protein is Twisted gastrulation protein homolog 1-B (twsg1-b).